The primary structure comprises 209 residues: Large ribosomal subunit protein bL25 (209 aa).

The tract at residues 190–209 (LKSEEAASEGAAEEEAKDGE) is disordered. Positions 200–209 (AAEEEAKDGE) are enriched in acidic residues.

It belongs to the bacterial ribosomal protein bL25 family. CTC subfamily. Part of the 50S ribosomal subunit; part of the 5S rRNA/L5/L18/L25 subcomplex. Contacts the 5S rRNA. Binds to the 5S rRNA independently of L5 and L18.

In terms of biological role, this is one of the proteins that binds to the 5S RNA in the ribosome where it forms part of the central protuberance. This Brucella anthropi (strain ATCC 49188 / DSM 6882 / CCUG 24695 / JCM 21032 / LMG 3331 / NBRC 15819 / NCTC 12168 / Alc 37) (Ochrobactrum anthropi) protein is Large ribosomal subunit protein bL25.